We begin with the raw amino-acid sequence, 633 residues long: MNSVLNSGRNTICDAYNVVVHDPFSFQHKSLDTIQKEWMEWKKDNHSLYVDPIVGTVASFLLKKLGSLIGKRILSELRNLIFPSGSTNLMEDILRETEKFLNQKLNTDTLSRVNAELTGLQANVEEFNRQVDNFLNPNRNAVPLSITSSVNTMQQLFLNRLSQFQMQGYQLLLLPLFAQAANLHLSFIRDVILNAEEWGISAATLRTYQNHLRNYTRDYSNYCIDTYQTAFRGLNTRLHDMLEFRTYMFLNVFEYVSIWSLFKYQSLLVSSGANLYASGSGPQQTQLFTSQDWPFLYSLFQVNSNYVLSGFSGASLFTTFPNIGGLPGSTTTQALLAARVNYSGGITSGSIGGSNFNQNFNCNTISPPLSTSFVRSWLDSGSDRQGVNTVTNWQTESFETTSGLRCGAFTPRGNSNYYPGYFIRNISGVSLVLRNEDLKRPLYYNEKRNIESPSGTPGGARAYMVSVHNKKNNIYAVHENGTMIHLAPEDNTGFTISPIHATQVNNQTRTFISEKFGNQGDSLRFEQSNTTARYTLRGNGNSYNLYLRVSSIGNSTIRVTINGRVYTASNVNTTTNNDGVNDNGARFSDINIGNVVASSNSDVPLDINVTLNSGTQFDLMNIMLVPTNISPLY.

Belongs to the delta endotoxin family.

Its function is as follows. Promotes colloidosmotic lysis by binding to the midgut epithelial cells of insects. The polypeptide is Pesticidal crystal protein Cry2Ad (cry2Ad) (Bacillus thuringiensis).